A 1298-amino-acid polypeptide reads, in one-letter code: Phosphoribosylformylglycinamidine synthase (1298 aa).

The interval 301 to 328 (APFPGASTGSGGEIRDEGATGRGAKPKA) is disordered. ATP-binding positions include 305–316 (GASTGSGGEIRD), 384–386 (TGY), and alanine 676. Aspartate 677, glutamate 716, asparagine 720, and aspartate 884 together coordinate Mg(2+). Serine 886 contacts ATP. Residues 1045 to 1298 (VAVLREQGVN…MFRNARVWVN (254 aa)) form the Glutamine amidotransferase type-1 domain. Residue cysteine 1138 is the Nucleophile of the active site. Catalysis depends on residues histidine 1263 and glutamate 1265.

The protein in the N-terminal section; belongs to the FGAMS family. As to quaternary structure, monomer.

It is found in the cytoplasm. It carries out the reaction N(2)-formyl-N(1)-(5-phospho-beta-D-ribosyl)glycinamide + L-glutamine + ATP + H2O = 2-formamido-N(1)-(5-O-phospho-beta-D-ribosyl)acetamidine + L-glutamate + ADP + phosphate + H(+). It functions in the pathway purine metabolism; IMP biosynthesis via de novo pathway; 5-amino-1-(5-phospho-D-ribosyl)imidazole from N(2)-formyl-N(1)-(5-phospho-D-ribosyl)glycinamide: step 1/2. In terms of biological role, phosphoribosylformylglycinamidine synthase involved in the purines biosynthetic pathway. Catalyzes the ATP-dependent conversion of formylglycinamide ribonucleotide (FGAR) and glutamine to yield formylglycinamidine ribonucleotide (FGAM) and glutamate. The protein is Phosphoribosylformylglycinamidine synthase of Pseudomonas fluorescens (strain Pf0-1).